The sequence spans 314 residues: Homoserine O-succinyltransferase (314 aa).

C142 (acyl-thioester intermediate) is an active-site residue. The substrate site is built by K163 and S192. The Proton acceptor role is filled by H235. E237 is a catalytic residue. R249 is a binding site for substrate.

The protein belongs to the MetA family.

The protein localises to the cytoplasm. It catalyses the reaction L-homoserine + succinyl-CoA = O-succinyl-L-homoserine + CoA. It participates in amino-acid biosynthesis; L-methionine biosynthesis via de novo pathway; O-succinyl-L-homoserine from L-homoserine: step 1/1. Functionally, transfers a succinyl group from succinyl-CoA to L-homoserine, forming succinyl-L-homoserine. The chain is Homoserine O-succinyltransferase from Aeromonas salmonicida (strain A449).